A 498-amino-acid polypeptide reads, in one-letter code: Probable cytosol aminopeptidase (498 aa).

Lys-271 and Asp-276 together coordinate Mn(2+). Lys-283 is an active-site residue. Residues Asp-294, Asp-353, and Glu-355 each contribute to the Mn(2+) site. The active site involves Arg-357.

Belongs to the peptidase M17 family. The cofactor is Mn(2+).

It is found in the cytoplasm. It catalyses the reaction Release of an N-terminal amino acid, Xaa-|-Yaa-, in which Xaa is preferably Leu, but may be other amino acids including Pro although not Arg or Lys, and Yaa may be Pro. Amino acid amides and methyl esters are also readily hydrolyzed, but rates on arylamides are exceedingly low.. It carries out the reaction Release of an N-terminal amino acid, preferentially leucine, but not glutamic or aspartic acids.. Its function is as follows. Presumably involved in the processing and regular turnover of intracellular proteins. Catalyzes the removal of unsubstituted N-terminal amino acids from various peptides. In Bordetella petrii (strain ATCC BAA-461 / DSM 12804 / CCUG 43448), this protein is Probable cytosol aminopeptidase.